The sequence spans 396 residues: Putative 3-phosphoinositide-dependent protein kinase 2 (396 aa).

Over residues 1-11 (MVRTQTESSTP) the composition is skewed to polar residues. The tract at residues 1-53 (MVRTQTESSTPPGIPGGSRQGPAMDGTAAEPRPGAGSLQHAQPPPQPRKKRPE) is disordered. Positions 55–315 (FKFGKILGEG…YGPLKAHPFF (261 aa)) constitute a Protein kinase domain. ATP-binding positions include 65–67 (SFS) and Lys84. Positions 86–130 (LEKRHIIKENKVPYVTRERDVMSRLDHPFFVKLYFTFQDDEKLYF) are PIF-pocket. Residues 133-135 (SYA) and Glu139 each bind ATP. Catalysis depends on Asp178, which acts as the Proton acceptor. 2 residues coordinate ATP: Glu182 and Asp196.

Belongs to the protein kinase superfamily. AGC Ser/Thr protein kinase family. PDPK1 subfamily. Post-translationally, phosphorylated on tyrosine and serine/threonine.

It localises to the cytoplasm. The protein resides in the membrane. It carries out the reaction L-seryl-[protein] + ATP = O-phospho-L-seryl-[protein] + ADP + H(+). The catalysed reaction is L-threonyl-[protein] + ATP = O-phospho-L-threonyl-[protein] + ADP + H(+). Its function is as follows. Phosphorylates and activates not only PKB/AKT, but also PKA, PKC-zeta, RPS6KA1 and RPS6KB1. May play a general role in signaling processes and in development. In Homo sapiens (Human), this protein is Putative 3-phosphoinositide-dependent protein kinase 2.